Consider the following 346-residue polypeptide: Archaeosine synthase subunit beta (346 aa).

A Radical SAM core domain is found at 36 to 276 (GVQTKTLTVI…LRQAKAAHPE (241 aa)). Positions 51, 59, and 62 each coordinate [4Fe-4S] cluster.

Belongs to the radical SAM superfamily. RaSEA family. Forms a robust complex with the archaeosine synthase alpha subunit ArcS. This complex likely consists of an alpha(2)beta(2) heterotetrameric structure. [4Fe-4S] cluster is required as a cofactor.

It catalyses the reaction 7-N-[(5S)-5-amino-5-carboxypentyl]formamidino-7-deazaguanosine(15) in tRNA + S-adenosyl-L-methionine = archaeosine(15) in tRNA + L-1-piperideine-6-carboxylate + 5'-deoxyadenosine + L-methionine + 2 H(+). It participates in tRNA modification; archaeosine-tRNA biosynthesis. Its function is as follows. Radical SAM enzyme involved in the synthesis of archaeosine, a modified nucleoside present in the dihydrouridine loop (D-loop) of archaeal tRNAs. Catalyzes the cleavage of the C(epsilon)-N bond of the lysine moiety of q0kN15-tRNA, leading to the formation of archaeosine at position 15 in tRNAs. The polypeptide is Archaeosine synthase subunit beta (Methanosarcina acetivorans (strain ATCC 35395 / DSM 2834 / JCM 12185 / C2A)).